The primary structure comprises 316 residues: Probable cell division protein WhiA (316 aa).

Residues 275–309 constitute a DNA-binding region (H-T-H motif); sequence TLKELGEMVSGGKISKSGINHRLRKIDEIAEKLRA.

Belongs to the WhiA family.

Its function is as follows. Involved in cell division and chromosome segregation. The sequence is that of Probable cell division protein WhiA from Bacillus mycoides (strain KBAB4) (Bacillus weihenstephanensis).